The following is a 109-amino-acid chain: Cell division suppressor protein YneA (109 aa).

The LysM domain occupies 40 to 94 (STVTITKGDTLWELSNKYHNHHHLTTNEFVKWVEDVNDLNSDTAQSLSPGDKLYI).

This sequence belongs to the YneA family.

The protein localises to the cytoplasm. Its function is as follows. Inhibits cell division during the SOS response. Affects a later stage of the cell division protein assembly, after the assembly of the Z ring, by probably suppressing recruitment of FtsL and/or DivIC to the division machinery. This chain is Cell division suppressor protein YneA, found in Priestia megaterium (strain DSM 319 / IMG 1521) (Bacillus megaterium).